The primary structure comprises 156 residues: ATP synthase subunit b (156 aa).

A helical membrane pass occupies residues 7 to 27 (LFAQMVVFLILAWFTMKFVWP).

This sequence belongs to the ATPase B chain family. In terms of assembly, F-type ATPases have 2 components, F(1) - the catalytic core - and F(0) - the membrane proton channel. F(1) has five subunits: alpha(3), beta(3), gamma(1), delta(1), epsilon(1). F(0) has three main subunits: a(1), b(2) and c(10-14). The alpha and beta chains form an alternating ring which encloses part of the gamma chain. F(1) is attached to F(0) by a central stalk formed by the gamma and epsilon chains, while a peripheral stalk is formed by the delta and b chains.

It localises to the cell inner membrane. Functionally, f(1)F(0) ATP synthase produces ATP from ADP in the presence of a proton or sodium gradient. F-type ATPases consist of two structural domains, F(1) containing the extramembraneous catalytic core and F(0) containing the membrane proton channel, linked together by a central stalk and a peripheral stalk. During catalysis, ATP synthesis in the catalytic domain of F(1) is coupled via a rotary mechanism of the central stalk subunits to proton translocation. In terms of biological role, component of the F(0) channel, it forms part of the peripheral stalk, linking F(1) to F(0). This Paraburkholderia xenovorans (strain LB400) protein is ATP synthase subunit b.